We begin with the raw amino-acid sequence, 847 residues long: uncharacterized protein (847 aa).

The segment covering 116 to 126 (TGSSELTTSKT) has biased composition (polar residues). Disordered regions lie at residues 116-153 (TGSS…TPIE), 208-245 (LKNF…RLSP), and 361-392 (DLEK…SNVI). Over residues 128 to 145 (IDVDTKEQENRLKQKAEA) the composition is skewed to basic and acidic residues. A compositionally biased stretch (polar residues) spans 368 to 378 (SSSASLSTNKL).

This is an uncharacterized protein from Caenorhabditis elegans.